The following is a 70-amino-acid chain: MEANTYLNAIILVLVVTIIAVISTSLVRTEPCVIKITGESITVLACKLDAETIRAIADLKPLSVERLSFH.

The Lumenal portion of the chain corresponds to 1 to 6 (MEANTY). Residues 7-27 (LNAIILVLVVTIIAVISTSLV) form a helical membrane-spanning segment. Topologically, residues 28-70 (RTEPCVIKITGESITVLACKLDAETIRAIADLKPLSVERLSFH) are cytoplasmic.

This sequence belongs to the Tymovirales TGBp3 protein family.

It is found in the host endoplasmic reticulum membrane. Functionally, plays a role in viral cell-to-cell propagation, by facilitating genome transport to neighboring plant cells through plasmosdesmata. May induce the formation of granular vesicles derived from the Endoplasmic reticulum, which align on actin filaments. The polypeptide is Movement protein TGBp3 (Potato virus X (PVX)).